A 192-amino-acid polypeptide reads, in one-letter code: Dynein axonemal light chain 1 (192 aa).

4 LRR repeats span residues 49–70 (NCEK…NGLK), 71–92 (YLKI…EAVG), 94–115 (TLEE…HVMK), and 116–137 (KLKV…SKLG). The region spanning 150-192 (NPLEEKHTAEGNWMEEAVKRLPKLKKLDGNPVIKQEEEEGDES) is the LRRCT domain.

Belongs to the dynein light chain LC1-type family. As to quaternary structure, interacts with DNAH5, a outer arm dynein heavy chain. Interacts with tubulin located within the A-tubule of the outer doublets in a ATP-independent manner.

Its subcellular location is the cytoplasm. It localises to the cytoskeleton. The protein localises to the cilium axoneme. Functionally, part of the multisubunit axonemal ATPase complexes that generate the force for cilia motility and govern beat frequency. Component of the outer arm dynein (ODA). May be involved in a mechanosensory feedback mechanism controlling ODA activity based on external conformational cues by tethering the outer arm dynein heavy chain (DNAH5) to the microtubule within the axoneme. This is Dynein axonemal light chain 1 (dnal1) from Xenopus laevis (African clawed frog).